Consider the following 234-residue polypeptide: Ubiquinone biosynthesis O-methyltransferase (234 aa).

4 residues coordinate S-adenosyl-L-methionine: arginine 40, glycine 59, aspartate 80, and methionine 123.

Belongs to the methyltransferase superfamily. UbiG/COQ3 family.

The enzyme catalyses a 3-demethylubiquinol + S-adenosyl-L-methionine = a ubiquinol + S-adenosyl-L-homocysteine + H(+). The catalysed reaction is a 3-(all-trans-polyprenyl)benzene-1,2-diol + S-adenosyl-L-methionine = a 2-methoxy-6-(all-trans-polyprenyl)phenol + S-adenosyl-L-homocysteine + H(+). The protein operates within cofactor biosynthesis; ubiquinone biosynthesis. Its function is as follows. O-methyltransferase that catalyzes the 2 O-methylation steps in the ubiquinone biosynthetic pathway. The protein is Ubiquinone biosynthesis O-methyltransferase of Coxiella burnetii (strain CbuG_Q212) (Coxiella burnetii (strain Q212)).